Reading from the N-terminus, the 182-residue chain is Adenine phosphoribosyltransferase (182 aa).

Belongs to the purine/pyrimidine phosphoribosyltransferase family. As to quaternary structure, homodimer.

The protein resides in the cytoplasm. The enzyme catalyses AMP + diphosphate = 5-phospho-alpha-D-ribose 1-diphosphate + adenine. It participates in purine metabolism; AMP biosynthesis via salvage pathway; AMP from adenine: step 1/1. In terms of biological role, catalyzes a salvage reaction resulting in the formation of AMP, that is energically less costly than de novo synthesis. This Streptomyces galbus protein is Adenine phosphoribosyltransferase.